The following is an 804-amino-acid chain: MIVTYNWLKEFVDFEMSPDELAHRLTMAGLEVDSMDFIGEGLDSVVTARLVSVDKHPDADKLTVCQVDYGQDTVQVVCGATNHKAGDVVALATVGTVLPGDFKIKKSKIRGMESFGMLCSEKELGLAQDSDGIMILSPDCEPGQPVFEVLGLKDVRYELGLTPNRPDCLSVLGVAREVSAMCGRSLNVNLPPLSEGDESTRALTSVTIEDAEYCPRYAARLIRGVKVGPSPDWLVRKLESVGQRSVNNVVDVTNFILMELGHPLHAFDYQRLAEGRIVVKRAASKEQFTTLDSVSRSLEKSDLVICDGQGAVALAGVMGGENSEVVAETVDILLESAYFNPLAIRRTSKRLSLRSEASHRFERGADIAMVPVALDKAAALIVQVAGGVVCKGMIDEFPRPLAERKVTLAVQRVNEILGLKLGMDDIQAHLLSIGLEVQPVEEKDIDRLVVTIPSFRPDLERDIDLVEEVARLNGYDNIPVTMPAGRMLCHLPPQHLREVKRLRDVMVAAGFNETVNYSFVAPEAWDRLELSDDDPRREPVKILNPLTEDQSVMRTSLVPSLLECVTRNVAYQNSDLHLFELRPVFLTHTDDVLPIEKWRLCAVLCGRREQEGWRQNDEKVDFYDLKGVVEQILDSFNVAKVTWDGSSSENFLHPGKSCTLKQKKTVLGTLGEVHPKVLAAFDIDQPVYLLDLDFEQLLMAAGGHGGFSALSRFPQVARDSAFLVDEDIPFSEISEVLNRSTGKLVEDIVLFDVYRGKGIPEGKKSLAIRVRYRSDDRTLKDEEIQKAHDKIVKALIAKLGAEIR.

The tRNA-binding domain occupies 39–147 (GEGLDSVVTA…PDCEPGQPVF (109 aa)). In terms of domain architecture, B5 spans 401–480 (LAERKVTLAV…RLNGYDNIPV (80 aa)). The Mg(2+) site is built by D458, D464, E467, and E468. In terms of domain architecture, FDX-ACB spans 711–804 (SRFPQVARDS…LIAKLGAEIR (94 aa)).

This sequence belongs to the phenylalanyl-tRNA synthetase beta subunit family. Type 1 subfamily. Tetramer of two alpha and two beta subunits. Mg(2+) is required as a cofactor.

It is found in the cytoplasm. The enzyme catalyses tRNA(Phe) + L-phenylalanine + ATP = L-phenylalanyl-tRNA(Phe) + AMP + diphosphate + H(+). In Syntrophotalea carbinolica (strain DSM 2380 / NBRC 103641 / GraBd1) (Pelobacter carbinolicus), this protein is Phenylalanine--tRNA ligase beta subunit.